We begin with the raw amino-acid sequence, 116 residues long: Large ribosomal subunit protein uL18 (116 aa).

The protein belongs to the universal ribosomal protein uL18 family. In terms of assembly, part of the 50S ribosomal subunit; part of the 5S rRNA/L5/L18/L25 subcomplex. Contacts the 5S and 23S rRNAs.

This is one of the proteins that bind and probably mediate the attachment of the 5S RNA into the large ribosomal subunit, where it forms part of the central protuberance. This is Large ribosomal subunit protein uL18 from Shewanella denitrificans (strain OS217 / ATCC BAA-1090 / DSM 15013).